The sequence spans 447 residues: Hemogen (447 aa).

Residues 1–91 form a disordered region; the sequence is MDLGKDQSLS…EMKVELPSQL (91 aa). Positions 7–86 are necessary for nuclear localization; sequence QSLSKLHQTP…RQQNTEMKVE (80 aa). Basic and acidic residues-rich tracts occupy residues 14-25 and 35-49; these read QTPDHHQEESHV and RNRE…EAQE. The span at 59–78 shows a compositional bias: basic residues; sequence EKKHKRQRTGKRSERGRKRQ. Residues Ser89 and Ser122 each carry the phosphoserine modification. Positions 137-156 are disordered; sequence QESVTLQENSSEYQATAVQN. Phosphoserine is present on Ser200. 2 disordered regions span residues 210–280 and 306–337; these read AKVL…MAVP and AMSK…PGSE. At Thr217 the chain carries Phosphothreonine. The span at 306-316 shows a compositional bias: basic and acidic residues; sequence AMSKDPSHKTT.

It is found in the nucleus. Functionally, regulates the proliferation and differentiation of hematopoietic cells. Overexpression block the TPA-induced megakaryocytic differentiation in the K562 cell model. May also prevent cell apoptosis through the activation of the nuclear factor-kappa B (NF-kB). This is Hemogen (HEMGN) from Bos taurus (Bovine).